Consider the following 159-residue polypeptide: Ribonuclease H (159 aa).

The region spanning 4 to 145 is the RNase H type-1 domain; the sequence is THKQVNIYTD…CDKLARDAAE (142 aa). Residues aspartate 13, glutamate 51, aspartate 73, and aspartate 137 each coordinate Mg(2+).

This sequence belongs to the RNase H family. As to quaternary structure, monomer. Mg(2+) is required as a cofactor.

Its subcellular location is the cytoplasm. The catalysed reaction is Endonucleolytic cleavage to 5'-phosphomonoester.. Its function is as follows. Endonuclease that specifically degrades the RNA of RNA-DNA hybrids. The polypeptide is Ribonuclease H (Shewanella denitrificans (strain OS217 / ATCC BAA-1090 / DSM 15013)).